Reading from the N-terminus, the 985-residue chain is Thioredoxin domain-containing protein 11 (985 aa).

Residues 1 to 11 show a composition bias toward gly residues; the sequence is MSECGGRGGGS. The tract at residues 1–38 is disordered; it reads MSECGGRGGGSSSSEDAEDEGGGGGGPAGSDCLSSSPT. Low complexity predominate over residues 29 to 38; that stretch reads GSDCLSSSPT. Residues 65-85 traverse the membrane as a helical segment; it reads LLCGAVALGCALLLALKFTCS. In terms of domain architecture, Thioredoxin 1 spans 92-214; the sequence is IPAKPPVSFF…IEKFVRRVMK (123 aa). 2 disulfide bridges follow: Cys-469-Cys-472 and Cys-719-Cys-722. The region spanning 649 to 799 is the Thioredoxin 2 domain; sequence LDPKQALMKL…LLRFILHHSD (151 aa). Positions 821–919 form a coiled coil; sequence VLQRGHISHL…ASENLLTENT (99 aa). Ser-828 is subject to Phosphoserine. Residues 935–985 are disordered; that stretch reads RDGAESLAAQREVHPKQPEPSATPQLPGSSPPPANVSATLVSERNKENRTD.

This sequence belongs to the protein disulfide isomerase family. Interacts with the cytoplasmic part of DUOX1 and DUOX2. Interacts with TPO and CYBA. As to expression, widely expressed at low level. Expressed at higher level in thyroid and prostate.

Its subcellular location is the endoplasmic reticulum membrane. Its function is as follows. May act as a redox regulator involved in DUOX proteins folding. The interaction with DUOX1 and DUOX2 suggest that it belongs to a multiprotein complex constituting the thyroid H(2)O(2) generating system. It is however not sufficient to assist DUOX1 and DUOX2 in H(2)O(2) generation. This is Thioredoxin domain-containing protein 11 (TXNDC11) from Homo sapiens (Human).